The following is a 381-amino-acid chain: Dual specificity protein phosphatase 6 (381 aa).

Positions 30–148 constitute a Rhodanese domain; that stretch reads GNERLLLMDC…FQAEFSLHCE (119 aa). The segment at 176–203 is disordered; that stretch reads SSSDIESDLDRDPNSATDSDGSPLSNSQ. Residues 189 to 203 show a composition bias toward polar residues; it reads NSATDSDGSPLSNSQ. In terms of domain architecture, Tyrosine-protein phosphatase spans 206 to 349; the sequence is FPVEILPFLY…LLDFERTLGL (144 aa). The active-site Phosphocysteine intermediate is cysteine 293.

Belongs to the protein-tyrosine phosphatase family. Non-receptor class dual specificity subfamily. In terms of assembly, interacts with MAPK1/ERK2. Ubiquitinated by the SCF(FBXO31) complex, leading to its proteasomal degradation. Expressed in keratinocytes (at protein level).

It is found in the cytoplasm. It carries out the reaction O-phospho-L-tyrosyl-[protein] + H2O = L-tyrosyl-[protein] + phosphate. The catalysed reaction is O-phospho-L-seryl-[protein] + H2O = L-seryl-[protein] + phosphate. The enzyme catalyses O-phospho-L-threonyl-[protein] + H2O = L-threonyl-[protein] + phosphate. Dual specificity protein phosphatase, which mediates dephosphorylation and inactivation of MAP kinases. Has a specificity for the ERK family. Plays an important role in alleviating chronic postoperative pain. Necessary for the normal dephosphorylation of the long-lasting phosphorylated forms of spinal MAPK1/3 and MAP kinase p38 induced by peripheral surgery, which drives the resolution of acute postoperative allodynia. Also important for dephosphorylation of MAPK1/3 in local wound tissue, which further contributes to resolution of acute pain. Promotes cell differentiation by regulating MAPK1/MAPK3 activity and regulating the expression of AP1 transcription factors. The protein is Dual specificity protein phosphatase 6 (DUSP6) of Homo sapiens (Human).